A 429-amino-acid polypeptide reads, in one-letter code: Enolase (429 aa).

Q164 is a binding site for (2R)-2-phosphoglycerate. E206 acts as the Proton donor in catalysis. Residues D243, E286, and D313 each coordinate Mg(2+). Positions 338, 367, 368, and 389 each coordinate (2R)-2-phosphoglycerate. The active-site Proton acceptor is the K338.

This sequence belongs to the enolase family. The cofactor is Mg(2+).

The protein resides in the cytoplasm. It is found in the secreted. The protein localises to the cell surface. It catalyses the reaction (2R)-2-phosphoglycerate = phosphoenolpyruvate + H2O. It functions in the pathway carbohydrate degradation; glycolysis; pyruvate from D-glyceraldehyde 3-phosphate: step 4/5. Functionally, catalyzes the reversible conversion of 2-phosphoglycerate (2-PG) into phosphoenolpyruvate (PEP). It is essential for the degradation of carbohydrates via glycolysis. The protein is Enolase of Thermosipho africanus (strain TCF52B).